The following is a 225-amino-acid chain: MARMKARSAKGKRVAKDTWKSKVWYDIYTPQSFGGDVIGQTPANDPATLIGRISEISLRDLTNEHSKHMTRMYFKVDGVSGNNATSQFVGHDTTREYLKSQVRRRRSKINAIVDVRTKDGFKLRVKALVLTAVRARDHHKTEIRVKMEQIIKDMAKETAFAEFVHAMLMGGLGSKIYGDCKKMFPLKRVEIFKSEVLEFGKAVEAPVEEAAAEEVAEAPVAETQE.

This sequence belongs to the eukaryotic ribosomal protein eS1 family.

This is Small ribosomal subunit protein eS1 from Methanococcus maripaludis (strain C6 / ATCC BAA-1332).